A 421-amino-acid chain; its full sequence is D-amino acid dehydrogenase (421 aa).

An FAD-binding site is contributed by 3–17 (VLVLGGGVVGVTSAY).

It belongs to the DadA oxidoreductase family. The cofactor is FAD.

The catalysed reaction is a D-alpha-amino acid + A + H2O = a 2-oxocarboxylate + AH2 + NH4(+). It functions in the pathway amino-acid degradation; D-alanine degradation; NH(3) and pyruvate from D-alanine: step 1/1. Functionally, oxidative deamination of D-amino acids. The protein is D-amino acid dehydrogenase of Methylobacterium sp. (strain 4-46).